The sequence spans 184 residues: MSAPSLNDLIELGAISEAQGLRGQVKIRPHSSEPVALLSSKSVWLSLIPRRDAGLSSPVEQASLTQYKVKSAKMHSGNVVIALEGVTDRDQALALKGARILVARDAFPKVETDSYYWIDLIGCNAINLQNETLGEVIDVTENGAHGVIAIGDASTKTIQYLVPFVKQVVQDVDLSNKTISLDWQ.

The 73-residue stretch at threonine 112–glutamine 184 folds into the PRC barrel domain.

This sequence belongs to the RimM family. In terms of assembly, binds ribosomal protein uS19.

The protein resides in the cytoplasm. Functionally, an accessory protein needed during the final step in the assembly of 30S ribosomal subunit, possibly for assembly of the head region. Essential for efficient processing of 16S rRNA. May be needed both before and after RbfA during the maturation of 16S rRNA. It has affinity for free ribosomal 30S subunits but not for 70S ribosomes. The sequence is that of Ribosome maturation factor RimM from Polynucleobacter necessarius subsp. necessarius (strain STIR1).